The following is a 268-amino-acid chain: Mesoderm posterior protein 1 (268 aa).

Residues Ala-17–Leu-93 are disordered. Residues Leu-36 to Ala-48 show a composition bias toward polar residues. Residues Ala-66 to Ser-86 show a composition bias toward low complexity. Positions Gly-82 to Leu-136 constitute a bHLH domain. The CPLCP signature appears at Cys-163–Pro-167. 2 tandem repeats follow at residues Gly-182–Gln-183 and Gly-184–Gln-185. The tract at residues Gly-182 to Gln-185 is 2 X 2 AA tandem repeats of G-Q.

It localises to the nucleus. Transcription factor. Plays a role in the epithelialization of somitic mesoderm and in the development of cardiac mesoderm. Defines the rostrocaudal patterning of the somites by participating in distinct Notch pathways. This chain is Mesoderm posterior protein 1 (MESP1), found in Homo sapiens (Human).